The primary structure comprises 279 residues: MKKVIILIFMLSTSLLYNCKNQDNEKIVSIGGSTTVSPILDEMILRYNKINNNTKVTYDAQGSSVGINGLFNKIYKIAISSRDLTKEEIEQGAKETVFAYDALIFITSPEIKITNITEENLAKILNGEIQNWKQVGGPDAKINFINRDSSSGSYSSIKDLLLNKIFKTHEEAQFRQDGIVVKSNGEVIEKTSLTPHSIGYIGLGYAKNSIEKGLNILSVNSTYPTKETINSNKYTIKRNLIIVTNNKYEDKSVTQFIDFMTSSTGQDIVEEQGFLGIKT.

Residues 1–18 (MKKVIILIFMLSTSLLYN) form the signal peptide. Cys19 carries the N-palmitoyl cysteine lipid modification. Cys19 carries the S-diacylglycerol cysteine lipid modification. Phosphate is bound by residues 33 to 35 (STT), Ser63, and 151 to 153 (SGS).

Belongs to the PstS family. In terms of assembly, monomer (in vitro). The complex is composed of two ATP-binding proteins (PstB), two transmembrane proteins (PstC and PstA) and a solute-binding protein (PstS).

Its subcellular location is the cell membrane. In terms of biological role, binds inorganic phosphate with a Kd of 1.2 uM. Part of the ABC transporter complex PstSACB involved in phosphate import. The polypeptide is Phosphate-binding protein PstS (Borreliella burgdorferi (strain ATCC 35210 / DSM 4680 / CIP 102532 / B31) (Borrelia burgdorferi)).